Consider the following 216-residue polypeptide: uncharacterized protein (216 aa).

A compositionally biased stretch (polar residues) spans 182–193; it reads STSNASVNSDDA. Residues 182–204 are disordered; sequence STSNASVNSDDASTAELGPTSEE.

This is an uncharacterized protein from Caenorhabditis elegans.